A 135-amino-acid polypeptide reads, in one-letter code: ATP synthase epsilon chain (135 aa).

The protein belongs to the ATPase epsilon chain family. As to quaternary structure, F-type ATPases have 2 components, CF(1) - the catalytic core - and CF(0) - the membrane proton channel. CF(1) has five subunits: alpha(3), beta(3), gamma(1), delta(1), epsilon(1). CF(0) has three main subunits: a, b and c.

Its subcellular location is the cell inner membrane. Functionally, produces ATP from ADP in the presence of a proton gradient across the membrane. This is ATP synthase epsilon chain from Rhizobium etli (strain ATCC 51251 / DSM 11541 / JCM 21823 / NBRC 15573 / CFN 42).